Consider the following 336-residue polypeptide: Nucleoid-associated protein ECA2747 (336 aa).

The disordered stretch occupies residues Lys317–Gln336.

It belongs to the YejK family.

Its subcellular location is the cytoplasm. The protein localises to the nucleoid. The chain is Nucleoid-associated protein ECA2747 from Pectobacterium atrosepticum (strain SCRI 1043 / ATCC BAA-672) (Erwinia carotovora subsp. atroseptica).